The primary structure comprises 183 residues: Ribosome rescue factor SmrB (183 aa).

The Smr domain occupies 98–173 (LDLHGLTQLQ…GDAALLVLIE (76 aa)).

Belongs to the SmrB family. As to quaternary structure, associates with collided ribosomes, but not with correctly translating polysomes.

In terms of biological role, acts as a ribosome collision sensor. Detects stalled/collided disomes (pairs of ribosomes where the leading ribosome is stalled and a second ribosome has collided with it) and endonucleolytically cleaves mRNA at the 5' boundary of the stalled ribosome. Stalled/collided disomes form a new interface (primarily via the 30S subunits) that binds SmrB. Cleaved mRNA becomes available for tmRNA ligation, leading to ribosomal subunit dissociation and rescue of stalled ribosomes. The protein is Ribosome rescue factor SmrB of Shigella boydii serotype 18 (strain CDC 3083-94 / BS512).